Consider the following 834-residue polypeptide: 1,4-alpha-glucan branching enzyme GlgB (834 aa).

The active-site Nucleophile is aspartate 511. Catalysis depends on glutamate 565, which acts as the Proton donor.

This sequence belongs to the glycosyl hydrolase 13 family. GlgB subfamily. In terms of assembly, monomer.

It catalyses the reaction Transfers a segment of a (1-&gt;4)-alpha-D-glucan chain to a primary hydroxy group in a similar glucan chain.. The protein operates within glycan biosynthesis; glycogen biosynthesis. Its function is as follows. Catalyzes the formation of the alpha-1,6-glucosidic linkages in glycogen by scission of a 1,4-alpha-linked oligosaccharide from growing alpha-1,4-glucan chains and the subsequent attachment of the oligosaccharide to the alpha-1,6 position. The polypeptide is 1,4-alpha-glucan branching enzyme GlgB (glgB) (Burkholderia thailandensis (strain ATCC 700388 / DSM 13276 / CCUG 48851 / CIP 106301 / E264)).